Here is a 254-residue protein sequence, read N- to C-terminus: Nickel import ATP-binding protein NikD (254 aa).

The ABC transporter domain occupies 2–241; that stretch reads PQQIELRNIA…PKHTVTRSLV (240 aa). An ATP-binding site is contributed by 36–43; that stretch reads GGSGSGKS.

This sequence belongs to the ABC transporter superfamily. Nickel importer (TC 3.A.1.5.3) family. In terms of assembly, the complex is composed of two ATP-binding proteins (NikD and NikE), two transmembrane proteins (NikB and NikC) and a solute-binding protein (NikA).

The protein localises to the cell inner membrane. The enzyme catalyses Ni(2+)(out) + ATP + H2O = Ni(2+)(in) + ADP + phosphate + H(+). In terms of biological role, part of the ABC transporter complex NikABCDE involved in nickel import. Responsible for energy coupling to the transport system. The sequence is that of Nickel import ATP-binding protein NikD from Shigella flexneri serotype 5b (strain 8401).